The following is a 154-amino-acid chain: Protein X (154 aa).

A mitochondrial targeting sequence region spans residues 68–117; the sequence is PCALRFTSARCMETTVNAHQILPKVLHKRTLGLPAMSTTDLEAYFKDSVF.

The protein belongs to the orthohepadnavirus protein X family. May form homodimer. May interact with host CEBPA, CFLAR, CREB1, DDB1, E4F1, HBXIP, HSPD1/HSP60, NFKBIA, POLR2E and SMAD4. Interacts with host SMC5-SMC6 complex and induces its degradation. Interacts with host TRPC4AP; leading to prevent ubiquitination of TRPC4AP. Interacts with host PLSCR1; this interaction promotes ubiquitination and degradation of HBx and impairs HBx-mediated cell proliferation. A fraction may be phosphorylated in insect cells and HepG2 cells, a human hepatoblastoma cell line. Phosphorylated in vitro by host protein kinase C or mitogen-activated protein kinase. N-acetylated in insect cells.

Its subcellular location is the host cytoplasm. It localises to the host nucleus. The protein localises to the host mitochondrion. Functionally, multifunctional protein that plays a role in silencing host antiviral defenses and promoting viral transcription. Does not seem to be essential for HBV infection. May be directly involved in development of cirrhosis and liver cancer (hepatocellular carcinoma). Most of cytosolic activities involve modulation of cytosolic calcium. The effect on apoptosis is controversial depending on the cell types in which the studies have been conducted. May induce apoptosis by localizing in mitochondria and causing loss of mitochondrial membrane potential. May also modulate apoptosis by binding host CFLAR, a key regulator of the death-inducing signaling complex (DISC). Promotes viral transcription by using the host E3 ubiquitin ligase DDB1 to target the SMC5-SMC6 complex to proteasomal degradation. This host complex would otherwise bind to viral episomal DNA, and prevents its transcription. Moderately stimulates transcription of many different viral and cellular transcription elements. Promoters and enhancers stimulated by HBx contain DNA binding sites for NF-kappa-B, AP-1, AP-2, c-EBP, ATF/CREB, or the calcium-activated factor NF-AT. In Homo sapiens (Human), this protein is Protein X.